The sequence spans 509 residues: tRNA-2-methylthio-N(6)-dimethylallyladenosine synthase (509 aa).

The segment covering 1 to 15 has biased composition (polar residues); that stretch reads MNEQQRLASQQVNSS. The tract at residues 1–26 is disordered; sequence MNEQQRLASQQVNSSTKKEEKDYSKY. Over residues 16 to 25 the composition is skewed to basic and acidic residues; the sequence is TKKEEKDYSK. An MTTase N-terminal domain is found at 66-184; it reads RKFYIRTYGC…LPYILKDAMF (119 aa). 6 residues coordinate [4Fe-4S] cluster: C75, C111, C145, C221, C225, and C228. A Radical SAM core domain is found at 207 to 437; sequence RRGDIKAWVN…NALVNKLAIE (231 aa). The region spanning 440–503 is the TRAM domain; sequence DRYKGQIVEV…TWSLNGELVE (64 aa).

Belongs to the methylthiotransferase family. MiaB subfamily. Monomer. Requires [4Fe-4S] cluster as cofactor.

It is found in the cytoplasm. The enzyme catalyses N(6)-dimethylallyladenosine(37) in tRNA + (sulfur carrier)-SH + AH2 + 2 S-adenosyl-L-methionine = 2-methylsulfanyl-N(6)-dimethylallyladenosine(37) in tRNA + (sulfur carrier)-H + 5'-deoxyadenosine + L-methionine + A + S-adenosyl-L-homocysteine + 2 H(+). Its function is as follows. Catalyzes the methylthiolation of N6-(dimethylallyl)adenosine (i(6)A), leading to the formation of 2-methylthio-N6-(dimethylallyl)adenosine (ms(2)i(6)A) at position 37 in tRNAs that read codons beginning with uridine. In Bacillus thuringiensis (strain Al Hakam), this protein is tRNA-2-methylthio-N(6)-dimethylallyladenosine synthase.